Consider the following 301-residue polypeptide: Protoheme IX farnesyltransferase (301 aa).

9 helical membrane-spanning segments follow: residues 20–42 (FTEL…GMWL), 55–75 (VDVI…SGAF), 105–125 (ALMV…MTTW), 126–146 (QAGV…SLYA), 150–172 (LVSN…WFAV), 176–198 (FSMV…FYAI), 227–247 (MFFW…LGIV), 249–269 (VILA…GFKM), and 280–300 (FIYS…ISIF).

It belongs to the UbiA prenyltransferase family. Protoheme IX farnesyltransferase subfamily. As to quaternary structure, interacts with CtaA.

Its subcellular location is the cell membrane. The enzyme catalyses heme b + (2E,6E)-farnesyl diphosphate + H2O = Fe(II)-heme o + diphosphate. Its pathway is porphyrin-containing compound metabolism; heme O biosynthesis; heme O from protoheme: step 1/1. Functionally, converts heme B (protoheme IX) to heme O by substitution of the vinyl group on carbon 2 of heme B porphyrin ring with a hydroxyethyl farnesyl side group. This chain is Protoheme IX farnesyltransferase, found in Listeria welshimeri serovar 6b (strain ATCC 35897 / DSM 20650 / CCUG 15529 / CIP 8149 / NCTC 11857 / SLCC 5334 / V8).